A 144-amino-acid chain; its full sequence is Putative sugar phosphate isomerase RBE_0278 (144 aa).

Position 12 (H12) interacts with substrate. H101 serves as the catalytic Proton donor. R135 contacts substrate.

Belongs to the LacAB/RpiB family.

The chain is Putative sugar phosphate isomerase RBE_0278 from Rickettsia bellii (strain RML369-C).